Reading from the N-terminus, the 203-residue chain is Monothiol glutaredoxin-7 (203 aa).

Residues 1-32 form the signal peptide; that stretch reads MAIVINKRNVRVLVITNLLLIVVFFVLRNSNA. The Glutaredoxin domain occupies 88 to 191; sequence AAEYNKIMEQ…DSFKKWSDGA (104 aa). [2Fe-2S] cluster is bound at residue cysteine 108.

It belongs to the glutaredoxin family. Monothiol subfamily.

This chain is Monothiol glutaredoxin-7 (GRX7), found in Saccharomyces cerevisiae (strain ATCC 204508 / S288c) (Baker's yeast).